Consider the following 363-residue polypeptide: MNKRKILVPLGEKSYEVTLEAGILNNISEELLKIGITKKRKILVISNEEISNLYGKKFLNNLKDNKFQAKMFLIKAGESYKNLKTLSEIYDVAFEFGLDRNSIIIALGGGIVGDVSGFAAATWLRGIEYIQIPTTLLSMVDSSVGGKTGVNHPKGKNLIGAFNQPKAVFIDPETLKSLPKREFSAGMAEVIKYGVIRDKELFEYLEIDKNKNELINLKNEYLIKIINSSIKTKSHVVSQDEHENGVRAILNYGHSFGHVIENLCGYGKFLHGEAISIGMNIAGKIAIEKGLWSKEELERQRVLLESYDLPTEIPKINKEDVLTILMGDKKVRDGKMRFILPKEIGAVDIYDDVEDSLFLKFFS.

Residues 134–135 (TT), lysine 147, and lysine 156 contribute to the NAD(+) site. Zn(2+) is bound by residues glutamate 189, histidine 254, and histidine 271.

This sequence belongs to the sugar phosphate cyclases superfamily. Dehydroquinate synthase family. The cofactor is Co(2+). Zn(2+) is required as a cofactor. NAD(+) serves as cofactor.

Its subcellular location is the cytoplasm. It catalyses the reaction 7-phospho-2-dehydro-3-deoxy-D-arabino-heptonate = 3-dehydroquinate + phosphate. It participates in metabolic intermediate biosynthesis; chorismate biosynthesis; chorismate from D-erythrose 4-phosphate and phosphoenolpyruvate: step 2/7. Catalyzes the conversion of 3-deoxy-D-arabino-heptulosonate 7-phosphate (DAHP) to dehydroquinate (DHQ). The sequence is that of 3-dehydroquinate synthase from Prochlorococcus marinus (strain MIT 9215).